A 286-amino-acid chain; its full sequence is 4-diphosphocytidyl-2-C-methyl-D-erythritol kinase (286 aa).

The active site involves Lys-11. 94–104 (PMGGGIGGGSS) is an ATP binding site. Asp-136 is a catalytic residue.

It belongs to the GHMP kinase family. IspE subfamily.

It carries out the reaction 4-CDP-2-C-methyl-D-erythritol + ATP = 4-CDP-2-C-methyl-D-erythritol 2-phosphate + ADP + H(+). The protein operates within isoprenoid biosynthesis; isopentenyl diphosphate biosynthesis via DXP pathway; isopentenyl diphosphate from 1-deoxy-D-xylulose 5-phosphate: step 3/6. Functionally, catalyzes the phosphorylation of the position 2 hydroxy group of 4-diphosphocytidyl-2C-methyl-D-erythritol. The chain is 4-diphosphocytidyl-2-C-methyl-D-erythritol kinase from Pseudomonas putida (strain ATCC 700007 / DSM 6899 / JCM 31910 / BCRC 17059 / LMG 24140 / F1).